Reading from the N-terminus, the 396-residue chain is Cytochrome P450 121 (396 aa).

Residue Cys345 coordinates heme.

It belongs to the cytochrome P450 family. It depends on heme as a cofactor.

The protein resides in the cytoplasm. The protein is Cytochrome P450 121 (cyp121) of Mycobacterium bovis (strain ATCC BAA-935 / AF2122/97).